Here is a 396-residue protein sequence, read N- to C-terminus: NADH-quinone oxidoreductase subunit D (396 aa).

Belongs to the complex I 49 kDa subunit family. In terms of assembly, NDH-1 is composed of 14 different subunits. Subunits NuoB, C, D, E, F, and G constitute the peripheral sector of the complex.

The protein resides in the cell inner membrane. The catalysed reaction is a quinone + NADH + 5 H(+)(in) = a quinol + NAD(+) + 4 H(+)(out). NDH-1 shuttles electrons from NADH, via FMN and iron-sulfur (Fe-S) centers, to quinones in the respiratory chain. The immediate electron acceptor for the enzyme in this species is believed to be ubiquinone. Couples the redox reaction to proton translocation (for every two electrons transferred, four hydrogen ions are translocated across the cytoplasmic membrane), and thus conserves the redox energy in a proton gradient. This chain is NADH-quinone oxidoreductase subunit D, found in Brucella anthropi (strain ATCC 49188 / DSM 6882 / CCUG 24695 / JCM 21032 / LMG 3331 / NBRC 15819 / NCTC 12168 / Alc 37) (Ochrobactrum anthropi).